Consider the following 282-residue polypeptide: Pantothenate synthetase (282 aa).

30 to 37 provides a ligand contact to ATP; that stretch reads MGNLHLGH. The active-site Proton donor is H37. Q61 is a binding site for (R)-pantoate. A beta-alanine-binding site is contributed by Q61. An ATP-binding site is contributed by 149–152; that stretch reads GQKD. Residue Q155 coordinates (R)-pantoate. Residues I178 and 186-189 each bind ATP; that span reads MSSR.

The protein belongs to the pantothenate synthetase family. As to quaternary structure, homodimer.

It is found in the cytoplasm. It carries out the reaction (R)-pantoate + beta-alanine + ATP = (R)-pantothenate + AMP + diphosphate + H(+). Its pathway is cofactor biosynthesis; (R)-pantothenate biosynthesis; (R)-pantothenate from (R)-pantoate and beta-alanine: step 1/1. In terms of biological role, catalyzes the condensation of pantoate with beta-alanine in an ATP-dependent reaction via a pantoyl-adenylate intermediate. The sequence is that of Pantothenate synthetase from Shewanella piezotolerans (strain WP3 / JCM 13877).